A 145-amino-acid chain; its full sequence is 3-hydroxyacyl-[acyl-carrier-protein] dehydratase FabZ (145 aa).

The active site involves histidine 47.

Belongs to the thioester dehydratase family. FabZ subfamily.

It localises to the cytoplasm. The catalysed reaction is a (3R)-hydroxyacyl-[ACP] = a (2E)-enoyl-[ACP] + H2O. Involved in unsaturated fatty acids biosynthesis. Catalyzes the dehydration of short chain beta-hydroxyacyl-ACPs and long chain saturated and unsaturated beta-hydroxyacyl-ACPs. In Polaromonas naphthalenivorans (strain CJ2), this protein is 3-hydroxyacyl-[acyl-carrier-protein] dehydratase FabZ.